The primary structure comprises 368 residues: G-protein coupled receptor 62 (368 aa).

Residues 1–18 (MANSTGLNASEVAGSLGL) are Extracellular-facing. Residues N3 and N8 are each glycosylated (N-linked (GlcNAc...) asparagine). The helical transmembrane segment at 19-39 (ILAAVVEVGALLGNGALLVVV) threads the bilayer. The Cytoplasmic segment spans residues 40 to 53 (LRTPGLRDALYLAH). The chain crosses the membrane as a helical span at residues 54–74 (LCVVDLLAAASIMPLGLLAAP). The Extracellular segment spans residues 75–91 (PPGLGRVRLGPAPCRAA). Residues 92-112 (RFLSAALLPACTLGVAALGLA) traverse the membrane as a helical segment. At 113–129 (RYRLIVHPLRPGSRPPP) the chain is on the cytoplasmic side. Residues 130–150 (VLVLTAVWAAAGLLGALSLLG) form a helical membrane-spanning segment. Over 151–177 (TPPAPPPAPARCSVLAGGLGPFRPLWA) the chain is Extracellular. Residues 178-198 (LLAFALPALLLLGAYGGIFVV) form a helical membrane-spanning segment. The Cytoplasmic portion of the chain corresponds to 199 to 239 (ARRAALRPPRPARGSRLHSDSLDSRLSILPPLRPRLPGGKA). A helical transmembrane segment spans residues 240–260 (ALAPALAVGQFAACWLPYGCA). Topologically, residues 261–272 (CLAPAARAAEAE) are extracellular. Residues 273 to 293 (AAVTWVAYSAFAAHPFLYGLL) traverse the membrane as a helical segment. At 294-368 (QRPVRLALGR…YQGPPESSLS (75 aa)) the chain is on the cytoplasmic side. The interval 332 to 368 (RPPEGPAVGPSEAPEQTPELAGGRSPAYQGPPESSLS) is disordered.

Belongs to the G-protein coupled receptor 1 family. Homodimers. Forms heterodimer with MTNR1B. Interacts with ARRB1 and ARRB2 in a spontaneous and agonist-independent manner; leading to the internalization of GPR62 in the endosomal compartment. As to expression, expressed in brain; detected in the basal forebrain, frontal cortex, caudate, putamen, thalamus and hippocampus.

It is found in the cell membrane. Its subcellular location is the endosome membrane. Functionally, orphan G-protein coupled receptor. Constitutively activates the G(q/11)/inositol phosphate and the G(s)-alpha/cAMP signaling pathways. Has spontaneous activity for beta-arrestin recruitment. Shows a reciprocal modulation of signaling functions with the melatonin receptor MTNR1B most likely through receptor heteromerization. The chain is G-protein coupled receptor 62 (GPR62) from Homo sapiens (Human).